The following is a 417-amino-acid chain: Gamma-glutamyl phosphate reductase (417 aa).

The protein belongs to the gamma-glutamyl phosphate reductase family.

The protein localises to the cytoplasm. The catalysed reaction is L-glutamate 5-semialdehyde + phosphate + NADP(+) = L-glutamyl 5-phosphate + NADPH + H(+). It participates in amino-acid biosynthesis; L-proline biosynthesis; L-glutamate 5-semialdehyde from L-glutamate: step 2/2. In terms of biological role, catalyzes the NADPH-dependent reduction of L-glutamate 5-phosphate into L-glutamate 5-semialdehyde and phosphate. The product spontaneously undergoes cyclization to form 1-pyrroline-5-carboxylate. The protein is Gamma-glutamyl phosphate reductase of Serratia proteamaculans (strain 568).